Consider the following 225-residue polypeptide: MAAEFNNDWDDLLKDEFEKEYYLNLRKFLIDEYKTQKIHPSMYDIFNALKFTPYKDVKVVILGQDPYHGPNQAHGFSFSVKPGVQTPPSLRNMFKELNSDLGCYIPNNGFLESWAKQGILLLNTVLTVREGQANSHKGKGWEIFTDRVIELLNKREEPIVFILWGRNAISKETLITNPIHKIIKSVHPSPLSATRGFFGSKPFSKTNDFLVSINKEPIDWQIPNI.

Residue Asp65 is the Proton acceptor of the active site.

It belongs to the uracil-DNA glycosylase (UDG) superfamily. UNG family.

The protein resides in the cytoplasm. The enzyme catalyses Hydrolyzes single-stranded DNA or mismatched double-stranded DNA and polynucleotides, releasing free uracil.. Excises uracil residues from the DNA which can arise as a result of misincorporation of dUMP residues by DNA polymerase or due to deamination of cytosine. In Clostridium perfringens (strain SM101 / Type A), this protein is Uracil-DNA glycosylase.